Consider the following 381-residue polypeptide: DNA replication and repair protein RecF (381 aa).

ATP is bound at residue 30–37 (GENAQGKT).

It belongs to the RecF family.

It localises to the cytoplasm. Functionally, the RecF protein is involved in DNA metabolism; it is required for DNA replication and normal SOS inducibility. RecF binds preferentially to single-stranded, linear DNA. It also seems to bind ATP. This is DNA replication and repair protein RecF from Lactobacillus delbrueckii subsp. bulgaricus (strain ATCC 11842 / DSM 20081 / BCRC 10696 / JCM 1002 / NBRC 13953 / NCIMB 11778 / NCTC 12712 / WDCM 00102 / Lb 14).